Consider the following 654-residue polypeptide: Mitochondrial-processing peptidase subunit alpha-1 (654 aa).

The disordered stretch occupies residues 73–94; it reads SSSSYKGNNNNNNKLSYTTSSN. A coiled-coil region spans residues 381-446; that stretch reads HKNHLKSQLQ…EQLELQQVKE (66 aa).

Belongs to the peptidase M16 family. Heterodimer of alpha and beta subunits, forming the mitochondrial processing protease (MPP) in which subunit alpha is involved in substrate recognition and binding and subunit beta is the catalytic subunit.

It is found in the mitochondrion matrix. Its function is as follows. Substrate recognition and binding subunit of the essential mitochondrial processing protease (MPP), which cleaves the mitochondrial sequence off newly imported precursors proteins. In Dictyostelium discoideum (Social amoeba), this protein is Mitochondrial-processing peptidase subunit alpha-1 (mppA1).